The chain runs to 161 residues: Allophycocyanin subunit alpha-B (161 aa).

At Asn-71 the chain carries N4-methylasparagine. Cys-81 contributes to the (2R,3E)-phycocyanobilin binding site.

The protein belongs to the phycobiliprotein family. Heterohexamer of two alpha chains, one alpha-B chain and three beta chains. Contains one covalently linked bilin chromophore.

The protein localises to the cellular thylakoid membrane. Light-harvesting photosynthetic bile pigment-protein from the phycobiliprotein complex. Allophycocyanin has a maximum absorption at approximately 654 nanometers. This chain is Allophycocyanin subunit alpha-B (apcD), found in Synechocystis sp. (strain ATCC 27184 / PCC 6803 / Kazusa).